We begin with the raw amino-acid sequence, 545 residues long: MATDAALRRLLRLHRTEIAVAVDSAFPLLHALADHDVVPEDKFQETLHLKEKEGCPQAFHALLSWLLTQDSTAILDFWRVLFKDYNLERYGRLQPILDSFPKDVDLSQPRKGRKPPAVPKALVPPPRLPTKRKASEEARAAAPAALTPRGTASPGSQLKAKPPKKPESSAEQQRLPLGNGIQTMSASVQRAVAMSSGDVPGARGAVEGILIQQVFESGGSKKCIQVGGEFYTPSKFEDSGSGKNKARSSSGPKPLVRAKGAQGAAPGGGEARLGQQGSVPAPLALPSDPQLHQKNEDECAVCRDGGELICCDGCPRAFHLACLSPPLREIPSGTWRCSSCLQATVQEVQPRAEEPRPQEPPVETPLPPGLRSAGEEVRGPPGEPLAGMDTTLVYKHLPAPPSAAPLPGLDSSALHPLLCVGPEGQQNLAPGARCGVCGDGTDVLRCTHCAAAFHWRCHFPAGTSRPGTGLRCRSCSGDVTPAPVEGVLAPSPARLAPGPAKDDTASHEPALHRDDLESLLSEHTFDGILQWAIQSMARPAAPFPS.

The 105-residue stretch at 1–105 folds into the HSR domain; it reads MATDAALRRL…ILDSFPKDVD (105 aa). Short sequence motifs (LXXLL motif) lie at residues 7–11 and 63–67; these read LRRLL and LSWLL. Disordered regions lie at residues 101–178 and 234–290; these read PKDV…LPLG and SKFE…SDPQ. Positions 116–128 are enriched in pro residues; sequence PAVPKALVPPPRL. Over residues 140-152 the composition is skewed to low complexity; the sequence is AAAPAALTPRGTA. The region spanning 181–280 is the SAND domain; it reads IQTMSASVQR…ARLGQQGSVP (100 aa). Interaction with histone H3 not methylated at 'Lys-4' regions lie at residues 295-298, 304-312, and 331-335; these read NEDE, DGGELICCD, and PSGTW. The PHD-type 1 zinc-finger motif lies at 296–343; the sequence is EDECAVCRDGGELICCDGCPRAFHLACLSPPLREIPSGTWRCSSCLQA. Residues 348–382 are disordered; the sequence is VQPRAEEPRPQEPPVETPLPPGLRSAGEEVRGPPG. The span at 358 to 368 shows a compositional bias: pro residues; sequence QEPPVETPLPP. The short motif at 414–418 is the LXXLL motif 3 element; the sequence is LHPLL. The segment at 434-475 adopts a PHD-type 2 zinc-finger fold; it reads CGVCGDGTDVLRCTHCAAAFHWRCHFPAGTSRPGTGLRCRSC. The tract at residues 489–508 is disordered; that stretch reads APSPARLAPGPAKDDTASHE. Residues 516 to 520 carry the LXXLL motif 4 motif; sequence LESLL.

Homodimer and homotetramer. Interacts with CREBBP. Interacts preferentially with histone H3 that is not methylated at 'Lys-4'. Binds with lower affinity to histone H3 that is monomethylated at 'Lys-4'. Trimethylation of histone H3 at 'Lys-4' or phosphorylation at 'Thr-3' abolish the interaction. Binds with lower affinity to histone H3 that is acetylated at 'Lys-4', or that is acetylated at 'Lys-9' or trimethylated at 'Lys-9'. Binds histone H3 that is dimethylated at 'Arg-2' with very low affinity. In terms of processing, phosphorylated. Phosphorylation could trigger oligomerization. As to expression, widely expressed. Expressed at higher level in thymus (medullary epithelial cells and monocyte-dendritic cells), pancreas, adrenal cortex and testis. Expressed at lower level in the spleen, fetal liver and lymph nodes. In secondary lymphoid organs, expressed in a discrete population of bone marrow-derived toleregenic antigen presenting cells (APCs) called extrathymic AIRE expressing cells (eTAC)(at protein level). Isoform 2 and isoform 3 seem to be less frequently expressed than isoform 1, if at all.

It localises to the nucleus. Its subcellular location is the cytoplasm. Transcription factor playing an essential role to promote self-tolerance in the thymus by regulating the expression of a wide array of self-antigens that have the commonality of being tissue-restricted in their expression pattern in the periphery, called tissue restricted antigens (TRA). Binds to G-doublets in an A/T-rich environment; the preferred motif is a tandem repeat of 5'-ATTGGTTA-3' combined with a 5'-TTATTA-3' box. Binds to nucleosomes. Binds to chromatin and interacts selectively with histone H3 that is not methylated at 'Lys-4', not phosphorylated at 'Thr-3' and not methylated at 'Arg-2'. Functions as a sensor of histone H3 modifications that are important for the epigenetic regulation of gene expression. Mainly expressed by medullary thymic epithelial cells (mTECs), induces the expression of thousands of tissue-restricted proteins, which are presented on major histocompatibility complex class I (MHC-I) and MHC-II molecules to developing T-cells percolating through the thymic medulla. Also induces self-tolerance through other mechanisms such as the regulation of the mTEC differentiation program. Controls the medullary accumulation of thymic dendritic cells and the development of regulatory T-cell through the regulation of XCL1 expression. Regulates the production of CCR4 and CCR7 ligands in medullary thymic epithelial cells and alters the coordinated maturation and migration of thymocytes. In thimic B-cells, allows the presentation of licensing-dependent endogenous self-anitgen for negative selection. In secondary lymphoid organs, induces functional inactivation of CD4(+) T-cells. Expressed by a distinct bone marrow-derived population, induces self-tolerance through a mechanism that does not require regulatory T-cells and is resitant to innate inflammatory stimuli. The protein is Autoimmune regulator (AIRE) of Homo sapiens (Human).